A 329-amino-acid polypeptide reads, in one-letter code: GTPase Obg (329 aa).

The Obg domain occupies 1-159; it reads MQFIDQAIID…WSLQLELKLL (159 aa). The OBG-type G domain occupies 160-328; that stretch reads AEVGIIGLPN…LLSSIWNELG (169 aa). ATP-binding positions include 166–173, 191–195, 213–216, 280–283, and 309–311; these read GLPNAGKS, FTTLI, DIPG, NKKE, and SAV. Residues Ser-173 and Thr-193 each coordinate Mg(2+).

The protein belongs to the TRAFAC class OBG-HflX-like GTPase superfamily. OBG GTPase family. As to quaternary structure, monomer. The cofactor is Mg(2+).

Its subcellular location is the cytoplasm. Functionally, an essential GTPase which binds GTP, GDP and possibly (p)ppGpp with moderate affinity, with high nucleotide exchange rates and a fairly low GTP hydrolysis rate. Plays a role in control of the cell cycle, stress response, ribosome biogenesis and in those bacteria that undergo differentiation, in morphogenesis control. This is GTPase Obg from Prochlorococcus marinus (strain NATL2A).